The following is a 382-amino-acid chain: MAPRAGQPGLQGLLLVAAALSQPAAPCPFQCYCFGGPKLLLRCASGAELRQPPRDVPPDARNLTIVGANLTVLRAAAFAGGDGDGDQAAGVRLPLLSALRLTHNHIEVVEDGAFDGLPSLAALDLSHNPLRALGGGAFRGLPALRSLQLNHALVRGGPALLAALDAALAPLAELRLLGLAGNALSRLPPAALRLARLEQLDVRLNALAGLDPDELRALERDGGLPGPRLLLADNPLRCGCAARPLLAWLRNATERVPDSRRLRCAAPRALLDRPLLDLDGARLRCADSGADARGEEAEAAGPELEASYVFFGLVLALIGLIFLMVLYLNRRGIQRWMRNLREACRDQMEGYHYRYEQDADPRRAPAPAAPAGSRATSPGSGL.

Positions 1-26 (MAPRAGQPGLQGLLLVAAALSQPAAP) are cleaved as a signal peptide. Disulfide bonds link Cys27–Cys33 and Cys31–Cys43. The Extracellular segment spans residues 27–307 (CPFQCYCFGG…EAAGPELEAS (281 aa)). LRR repeat units lie at residues 57–80 (PPDARNLTIVGANLTVLRAAAFAG), 93–116 (LPLLSALRLTHNHIEVVEDGAFDG), 117–140 (LPSLAALDLSHNPLRALGGGAFRG), 171–194 (LAELRLLGLAGNALSRLPPAALRL), and 196–217 (RLEQLDVRLNALAGLDPDELRA). Residue Asn62 is glycosylated (N-linked (GlcNAc...) asparagine). Intrachain disulfides connect Cys238–Cys264 and Cys240–Cys285. The chain crosses the membrane as a helical span at residues 308–328 (YVFFGLVLALIGLIFLMVLYL). Residues 329–382 (NRRGIQRWMRNLREACRDQMEGYHYRYEQDADPRRAPAPAAPAGSRATSPGSGL) lie on the Cytoplasmic side of the membrane. Residues 358 to 382 (DADPRRAPAPAAPAGSRATSPGSGL) are disordered. The span at 365-382 (PAPAAPAGSRATSPGSGL) shows a compositional bias: low complexity.

It is found in the membrane. The chain is Trophoblast glycoprotein-like (TPBGL) from Homo sapiens (Human).